A 404-amino-acid polypeptide reads, in one-letter code: Glucose-1-phosphate adenylyltransferase (404 aa).

Alpha-D-glucose 1-phosphate-binding positions include Tyr-99, Gly-164, 179 to 180 (EK), and Ser-197.

It belongs to the bacterial/plant glucose-1-phosphate adenylyltransferase family.

The enzyme catalyses alpha-D-glucose 1-phosphate + ATP + H(+) = ADP-alpha-D-glucose + diphosphate. Its pathway is glycan biosynthesis; glycogen biosynthesis. Involved in the biosynthesis of ADP-glucose building block, required in the biosynthesis of maltose-1-phosphate (M1P) and in the elongation reactions to produce linear alpha-1,4-glucans. Catalyzes the reaction between ATP and alpha-D-glucose 1-phosphate (G1P) to produce pyrophosphate and ADP-Glc. In Mycolicibacterium smegmatis (strain ATCC 700084 / mc(2)155) (Mycobacterium smegmatis), this protein is Glucose-1-phosphate adenylyltransferase.